The following is a 401-amino-acid chain: Tryptophan synthase beta chain (401 aa).

Lysine 88 carries the N6-(pyridoxal phosphate)lysine modification.

This sequence belongs to the TrpB family. As to quaternary structure, tetramer of two alpha and two beta chains. The cofactor is pyridoxal 5'-phosphate.

It catalyses the reaction (1S,2R)-1-C-(indol-3-yl)glycerol 3-phosphate + L-serine = D-glyceraldehyde 3-phosphate + L-tryptophan + H2O. It functions in the pathway amino-acid biosynthesis; L-tryptophan biosynthesis; L-tryptophan from chorismate: step 5/5. The beta subunit is responsible for the synthesis of L-tryptophan from indole and L-serine. This chain is Tryptophan synthase beta chain, found in Shewanella denitrificans (strain OS217 / ATCC BAA-1090 / DSM 15013).